The sequence spans 494 residues: E3 ubiquitin-protein ligase ari-1.1 (494 aa).

Over residues 1–30 (MSSDDEINMDDSDSSQGEIDDGCMSDDDGI) the composition is skewed to acidic residues. Residues 1 to 52 (MSSDDEINMDDSDSSQGEIDDGCMSDDDGIVLESREQNSSDYKDNGEPDNEV) are disordered. Over residues 33–52 (ESREQNSSDYKDNGEPDNEV) the composition is skewed to basic and acidic residues. The TRIAD supradomain stretch occupies residues 124-331 (GDAECDICCS…SSWYSCNRFD (208 aa)). Cysteine 128, cysteine 131, cysteine 142, histidine 144, cysteine 147, cysteine 150, cysteine 169, cysteine 174, cysteine 214, cysteine 219, cysteine 235, cysteine 237, cysteine 242, cysteine 245, histidine 250, cysteine 255, cysteine 282, and cysteine 285 together coordinate Zn(2+). An RING-type 1 zinc finger spans residues 128 to 174 (CDICCSLGELSGLSCNHRACTQCWKAYLTNKIANNAQSEIECMAPNC). Residues 194–255 (ATYRKLIVAS…GHDWHEPVNC (62 aa)) form an IBR-type zinc finger. The RING-type 2; atypical zinc finger occupies 282 to 313 (CPKCMITIEKDGGCNHMTCKNTACRFEFCWMC). Cysteine 295 is a catalytic residue. Zn(2+) contacts are provided by cysteine 300, cysteine 305, cysteine 310, cysteine 313, histidine 320, and cysteine 327. The interval 346–494 (RANLQRYLFY…ADQELWVFNE (149 aa)) is ariadne domain.

Belongs to the RBR family. Ariadne subfamily. As to quaternary structure, interacts with ubiquitin-conjugating enzyme E2 ubc-18.

It localises to the nucleus. Its subcellular location is the cytoplasm. It carries out the reaction [E2 ubiquitin-conjugating enzyme]-S-ubiquitinyl-L-cysteine + [acceptor protein]-L-lysine = [E2 ubiquitin-conjugating enzyme]-L-cysteine + [acceptor protein]-N(6)-ubiquitinyl-L-lysine.. Autoinhibited by the ariadne domain, which masks the second RING-type zinc finger that contains the active site and inhibits the E3 activity. Functionally, E3 ubiquitin-protein transferase, which catalyzes ubiquitination of target proteins together with ubiquitin-conjugating enzyme E2 ubc-18. Acts with ubc-18 to regulate pharyngeal development. The chain is E3 ubiquitin-protein ligase ari-1.1 from Caenorhabditis elegans.